A 238-amino-acid chain; its full sequence is Lactate utilization protein A (238 aa).

Belongs to the LutA/YkgE family.

Its function is as follows. Is involved in L-lactate degradation and allows cells to grow with lactate as the sole carbon source. In Bacillus velezensis (strain DSM 23117 / BGSC 10A6 / LMG 26770 / FZB42) (Bacillus amyloliquefaciens subsp. plantarum), this protein is Lactate utilization protein A.